We begin with the raw amino-acid sequence, 131 residues long: MQKIDKTLEEWRAMLDPAQYQVCRLKGTERPFSGKYNSERRDGVYHCICCDLPLFDSKAKFDSGCGWPSFYEPIEEAAMIEIRDTSHGMIRTEVTCAQCDAHLGHVFPDGPPPTGLRYCINSVCLDLKPRD.

The 123-residue stretch at 8–130 (LEEWRAMLDP…NSVCLDLKPR (123 aa)) folds into the MsrB domain. The Zn(2+) site is built by C47, C50, C96, and C99. The Nucleophile role is filled by C119.

The protein belongs to the MsrB Met sulfoxide reductase family. Zn(2+) serves as cofactor.

It carries out the reaction L-methionyl-[protein] + [thioredoxin]-disulfide + H2O = L-methionyl-(R)-S-oxide-[protein] + [thioredoxin]-dithiol. This Pseudomonas entomophila (strain L48) protein is Peptide methionine sulfoxide reductase MsrB.